The following is a 60-amino-acid chain: Large ribosomal subunit protein uL30 (60 aa).

The protein belongs to the universal ribosomal protein uL30 family. Part of the 50S ribosomal subunit.

In Thermus thermophilus (strain ATCC BAA-163 / DSM 7039 / HB27), this protein is Large ribosomal subunit protein uL30.